Reading from the N-terminus, the 489-residue chain is Metalloreductase STEAP2 (489 aa).

NADP(+) is bound by residues 37–40 (SGDF), 59–60 (SR), 92–99 (IHREHYTS), N117, and A150. Residues W151 and D159 each coordinate FAD. A helical membrane pass occupies residues 207-227 (LFTLWRGPVVVAISLATFFFL). Y228 contacts Fe(3+). Residues 258–278 (LPIVAITLLSLVYLAGLLAAA) traverse the membrane as a helical segment. Residues 258-406 (LPIVAITLLS…LGYVALLITT (149 aa)) form the Ferric oxidoreductase domain. Residues Q280 and R301 each contribute to the FAD site. 4 helical membrane-spanning segments follow: residues 304–324 (LGLL…CLPM), 358–378 (MYIS…VTSI), 392–412 (FIQS…VLIY), and 431–451 (FVLA…LLLP). Residue H315 coordinates heme b. Y318 serves as a coordination point for Fe(3+). FAD-binding residues include S377 and Q394. H408 is a heme b binding site. S482 is subject to Phosphoserine.

The protein belongs to the STEAP family. FAD serves as cofactor. Heme b is required as a cofactor.

The protein localises to the cell membrane. It localises to the endosome membrane. It catalyses the reaction 2 Fe(2+) + NADP(+) + H(+) = 2 Fe(3+) + NADPH. It carries out the reaction 2 Cu(+) + NADP(+) + H(+) = 2 Cu(2+) + NADPH. Integral membrane protein that functions as a NADPH-dependent ferric-chelate reductase, using NADPH from one side of the membrane to reduce a Fe(3+) chelate that is bound on the other side of the membrane. Mediates sequential transmembrane electron transfer from NADPH to FAD and onto heme, and finally to the Fe(3+) chelate. Can also reduce Cu(2+) to Cu(1+). This chain is Metalloreductase STEAP2 (Steap2), found in Mus musculus (Mouse).